A 139-amino-acid polypeptide reads, in one-letter code: Ribulose bisphosphate carboxylase small subunit (139 aa).

Belongs to the RuBisCO small chain family. As to quaternary structure, heterohexadecamer of 8 large and 8 small subunits.

It localises to the plastid. The protein resides in the chloroplast. Its function is as follows. RuBisCO catalyzes two reactions: the carboxylation of D-ribulose 1,5-bisphosphate, the primary event in carbon dioxide fixation, as well as the oxidative fragmentation of the pentose substrate in the photorespiration process. Both reactions occur simultaneously and in competition at the same active site. Although the small subunit is not catalytic it is essential for maximal activity. This chain is Ribulose bisphosphate carboxylase small subunit, found in Chrysotila carterae (Marine alga).